Consider the following 82-residue polypeptide: Beta-neurotoxin Css9 (82 aa).

Residues 1–17 (MKLLMLIVALMIIGVQS) form the signal peptide. An LCN-type CS-alpha/beta domain is found at 18-81 (KDGYPMDHKG…VWDRATNKCR (64 aa)). Cystine bridges form between C28–C80, C32–C54, C39–C61, and C43–C63.

The protein belongs to the long (4 C-C) scorpion toxin superfamily. Sodium channel inhibitor family. Beta subfamily. In terms of tissue distribution, expressed by the venom gland.

It is found in the secreted. Beta toxins bind voltage-independently at site-4 of sodium channels (Nav) and shift the voltage of activation toward more negative potentials thereby affecting sodium channel activation and promoting spontaneous and repetitive firing. This toxin compete with high affinity with 125I-Css4 bound on rat brain synaptosome and may bind with high affinity to Nav1.1/SCN1A, Nav1.2/SCN2A and Nav1.6/SCN8A. This is Beta-neurotoxin Css9 from Centruroides suffusus (Durango bark scorpion).